We begin with the raw amino-acid sequence, 601 residues long: DNA topoisomerase I, mitochondrial (601 aa).

A mitochondrion-targeting transit peptide spans 1–50 (MRVVRLLRLRAALTLLGEVPRRPASRGVPGSRRTQKGSGARWEKEKHEDG). Residues 22 to 48 (RPASRGVPGSRRTQKGSGARWEKEKHE) are disordered. Interaction with DNA regions lie at residues 261-262 (KY), 324-329 (RAGNEK), and 421-423 (TAK). Positions 268–601 (CSKLKGETAW…LAMAGEDFEF (334 aa)) constitute a Topo IB-type catalytic domain. Catalysis depends on Tyr559, which acts as the O-(3'-phospho-DNA)-tyrosine intermediate.

This sequence belongs to the type IB topoisomerase family. It depends on Ca(2+) as a cofactor. The cofactor is Mg(2+). As to expression, ubiquitous; highest in skeletal muscle, heart, brain and fetal liver.

It is found in the mitochondrion. It catalyses the reaction ATP-independent breakage of single-stranded DNA, followed by passage and rejoining.. In terms of biological role, releases the supercoiling and torsional tension of DNA introduced during duplication of mitochondrial DNA by transiently cleaving and rejoining one strand of the DNA duplex. Introduces a single-strand break via transesterification at a target site in duplex DNA. The scissile phosphodiester is attacked by the catalytic tyrosine of the enzyme, resulting in the formation of a DNA-(3'-phosphotyrosyl)-enzyme intermediate and the expulsion of a 5'-OH DNA strand. The free DNA strand then rotates around the intact phosphodiester bond on the opposing strand, thus removing DNA supercoils. Finally, in the religation step, the DNA 5'-OH attacks the covalent intermediate to expel the active-site tyrosine and restore the DNA phosphodiester backbone. The polypeptide is DNA topoisomerase I, mitochondrial (TOP1MT) (Homo sapiens (Human)).